Here is a 159-residue protein sequence, read N- to C-terminus: NAD(P)H-quinone oxidoreductase subunit J, chloroplastic (159 aa).

This sequence belongs to the complex I 30 kDa subunit family. In terms of assembly, NDH is composed of at least 16 different subunits, 5 of which are encoded in the nucleus.

It is found in the plastid. The protein localises to the chloroplast thylakoid membrane. The catalysed reaction is a plastoquinone + NADH + (n+1) H(+)(in) = a plastoquinol + NAD(+) + n H(+)(out). It carries out the reaction a plastoquinone + NADPH + (n+1) H(+)(in) = a plastoquinol + NADP(+) + n H(+)(out). Its function is as follows. NDH shuttles electrons from NAD(P)H:plastoquinone, via FMN and iron-sulfur (Fe-S) centers, to quinones in the photosynthetic chain and possibly in a chloroplast respiratory chain. The immediate electron acceptor for the enzyme in this species is believed to be plastoquinone. Couples the redox reaction to proton translocation, and thus conserves the redox energy in a proton gradient. This chain is NAD(P)H-quinone oxidoreductase subunit J, chloroplastic, found in Triticum aestivum (Wheat).